A 424-amino-acid chain; its full sequence is Phosphomethylpyrimidine synthase (424 aa).

Substrate contacts are provided by residues M94, Y123, H162, 184 to 186 (SRG), 225 to 228 (NGMR), and E264. Zn(2+) is bound at residue H268. Y291 contacts substrate. H332 provides a ligand contact to Zn(2+). 3 residues coordinate [4Fe-4S] cluster: C406, C409, and C413.

Belongs to the ThiC family. It depends on [4Fe-4S] cluster as a cofactor.

It carries out the reaction 5-amino-1-(5-phospho-beta-D-ribosyl)imidazole + S-adenosyl-L-methionine = 4-amino-2-methyl-5-(phosphooxymethyl)pyrimidine + CO + 5'-deoxyadenosine + formate + L-methionine + 3 H(+). Its pathway is cofactor biosynthesis; thiamine diphosphate biosynthesis. Functionally, catalyzes the synthesis of the hydroxymethylpyrimidine phosphate (HMP-P) moiety of thiamine from aminoimidazole ribotide (AIR) in a radical S-adenosyl-L-methionine (SAM)-dependent reaction. The sequence is that of Phosphomethylpyrimidine synthase from Methanosphaerula palustris (strain ATCC BAA-1556 / DSM 19958 / E1-9c).